We begin with the raw amino-acid sequence, 108 residues long: MIKTTLLFFATALCEIIGCFLPWLWLKRNASIWLLLPAGISLALFVWLLTLHPAASGRVYAAYGGVYVCTALMWLRVVDGVKLSLYDWTGALIALCGMLIIVAGWGRT.

Residues 1–5 lie on the Periplasmic side of the membrane; sequence MIKTT. Residues 6–26 traverse the membrane as a helical segment; the sequence is LLFFATALCEIIGCFLPWLWL. Residues 27-30 lie on the Cytoplasmic side of the membrane; that stretch reads KRNA. The helical transmembrane segment at 31-51 threads the bilayer; that stretch reads SIWLLLPAGISLALFVWLLTL. At 52–60 the chain is on the periplasmic side; it reads HPAASGRVY. A helical membrane pass occupies residues 61-81; that stretch reads AAYGGVYVCTALMWLRVVDGV. Over 82 to 84 the chain is Cytoplasmic; sequence KLS. A helical membrane pass occupies residues 85-105; the sequence is LYDWTGALIALCGMLIIVAGW. The Periplasmic portion of the chain corresponds to 106–108; it reads GRT.

This sequence belongs to the UPF0060 family.

It is found in the cell inner membrane. This chain is UPF0060 membrane protein YnfA, found in Shigella flexneri serotype 5b (strain 8401).